A 154-amino-acid chain; its full sequence is SsrA-binding protein (154 aa).

Belongs to the SmpB family.

Its subcellular location is the cytoplasm. Functionally, required for rescue of stalled ribosomes mediated by trans-translation. Binds to transfer-messenger RNA (tmRNA), required for stable association of tmRNA with ribosomes. tmRNA and SmpB together mimic tRNA shape, replacing the anticodon stem-loop with SmpB. tmRNA is encoded by the ssrA gene; the 2 termini fold to resemble tRNA(Ala) and it encodes a 'tag peptide', a short internal open reading frame. During trans-translation Ala-aminoacylated tmRNA acts like a tRNA, entering the A-site of stalled ribosomes, displacing the stalled mRNA. The ribosome then switches to translate the ORF on the tmRNA; the nascent peptide is terminated with the 'tag peptide' encoded by the tmRNA and targeted for degradation. The ribosome is freed to recommence translation, which seems to be the essential function of trans-translation. This is SsrA-binding protein from Acetivibrio thermocellus (strain ATCC 27405 / DSM 1237 / JCM 9322 / NBRC 103400 / NCIMB 10682 / NRRL B-4536 / VPI 7372) (Clostridium thermocellum).